Here is a 501-residue protein sequence, read N- to C-terminus: Xylulose kinase (501 aa).

A substrate-binding site is contributed by 81-82 (MH). Aspartate 239 acts as the Proton acceptor in catalysis.

It belongs to the FGGY kinase family.

It carries out the reaction D-xylulose + ATP = D-xylulose 5-phosphate + ADP + H(+). Its function is as follows. Catalyzes the phosphorylation of D-xylulose to D-xylulose 5-phosphate. The sequence is that of Xylulose kinase from Lactococcus lactis subsp. lactis (strain IL1403) (Streptococcus lactis).